We begin with the raw amino-acid sequence, 567 residues long: Proline--tRNA ligase (567 aa).

The protein belongs to the class-II aminoacyl-tRNA synthetase family. ProS type 1 subfamily. In terms of assembly, homodimer.

The protein localises to the cytoplasm. The enzyme catalyses tRNA(Pro) + L-proline + ATP = L-prolyl-tRNA(Pro) + AMP + diphosphate. Catalyzes the attachment of proline to tRNA(Pro) in a two-step reaction: proline is first activated by ATP to form Pro-AMP and then transferred to the acceptor end of tRNA(Pro). As ProRS can inadvertently accommodate and process non-cognate amino acids such as alanine and cysteine, to avoid such errors it has two additional distinct editing activities against alanine. One activity is designated as 'pretransfer' editing and involves the tRNA(Pro)-independent hydrolysis of activated Ala-AMP. The other activity is designated 'posttransfer' editing and involves deacylation of mischarged Ala-tRNA(Pro). The misacylated Cys-tRNA(Pro) is not edited by ProRS. This Staphylococcus epidermidis (strain ATCC 35984 / DSM 28319 / BCRC 17069 / CCUG 31568 / BM 3577 / RP62A) protein is Proline--tRNA ligase.